A 380-amino-acid polypeptide reads, in one-letter code: 8-amino-7-oxononanoate synthase (380 aa).

Arg-26 contributes to the substrate binding site. Residue Gly-104–Tyr-105 coordinates pyridoxal 5'-phosphate. His-129 is a substrate binding site. Residues Ser-175, Asp-200–His-203, and Thr-232–Lys-235 contribute to the pyridoxal 5'-phosphate site. An N6-(pyridoxal phosphate)lysine modification is found at Lys-235. Substrate is bound at residue Thr-345.

This sequence belongs to the class-II pyridoxal-phosphate-dependent aminotransferase family. BioF subfamily. Homodimer. Pyridoxal 5'-phosphate is required as a cofactor.

The enzyme catalyses 6-carboxyhexanoyl-[ACP] + L-alanine + H(+) = (8S)-8-amino-7-oxononanoate + holo-[ACP] + CO2. It participates in cofactor biosynthesis; biotin biosynthesis. Functionally, catalyzes the decarboxylative condensation of pimeloyl-[acyl-carrier protein] and L-alanine to produce 8-amino-7-oxononanoate (AON), [acyl-carrier protein], and carbon dioxide. This Mycolicibacterium gilvum (strain PYR-GCK) (Mycobacterium gilvum (strain PYR-GCK)) protein is 8-amino-7-oxononanoate synthase.